A 369-amino-acid polypeptide reads, in one-letter code: Choline-phosphate cytidylyltransferase B (369 aa).

Residues 1–27 form a disordered region; sequence MPVVTTDAESETGIPKSLSNEPPSETM. Residues I84, F85, H92, and K122 each contribute to the CTP site. Phosphocholine contacts are provided by K122 and W151. CTP-binding residues include H168, D169, Y173, Q195, R196, T197, and I200. A disordered region spans residues 309-369; that stretch reads RMLQALSPKQ…SMSEGDEDEK (61 aa). Phosphoserine occurs at positions 315, 319, 322, 323, 329, 331, and 335. Over residues 319-339 the composition is skewed to low complexity; it reads SPVSSPTRSRSPSRSPSPTFS. T345 is modified (phosphothreonine). S346, S349, S350, S355, S360, and S362 each carry phosphoserine. Low complexity predominate over residues 351–362; that stretch reads PKAASASISSMS.

Belongs to the cytidylyltransferase family. In terms of assembly, homodimer. Post-translationally, phosphorylated. Extensively phosphorylated. Highly expressed in testis, placenta, brain, ovary, liver and fetal lung. In terms of tissue distribution, expressed in brain, liver and fetal lung.

The protein localises to the cytoplasm. The protein resides in the endoplasmic reticulum. It carries out the reaction phosphocholine + CTP + H(+) = CDP-choline + diphosphate. Its pathway is phospholipid metabolism; phosphatidylcholine biosynthesis; phosphatidylcholine from phosphocholine: step 1/2. Functionally, catalyzes the key rate-limiting step in the CDP-choline pathway for phosphatidylcholine biosynthesis. The protein is Choline-phosphate cytidylyltransferase B (PCYT1B) of Homo sapiens (Human).